Here is a 291-residue protein sequence, read N- to C-terminus: Pantothenate synthetase (291 aa).

Position 30–37 (30–37 (MGNLHEGH)) interacts with ATP. His37 (proton donor) is an active-site residue. Residue Gln61 participates in (R)-pantoate binding. Beta-alanine is bound at residue Gln61. 149 to 152 (GEKD) contributes to the ATP binding site. Gln155 contacts (R)-pantoate. ATP contacts are provided by residues Val178 and 186 to 189 (MSSR).

It belongs to the pantothenate synthetase family. In terms of assembly, homodimer.

The protein localises to the cytoplasm. The catalysed reaction is (R)-pantoate + beta-alanine + ATP = (R)-pantothenate + AMP + diphosphate + H(+). Its pathway is cofactor biosynthesis; (R)-pantothenate biosynthesis; (R)-pantothenate from (R)-pantoate and beta-alanine: step 1/1. In terms of biological role, catalyzes the condensation of pantoate with beta-alanine in an ATP-dependent reaction via a pantoyl-adenylate intermediate. This chain is Pantothenate synthetase, found in Aliivibrio fischeri (strain ATCC 700601 / ES114) (Vibrio fischeri).